Here is a 260-residue protein sequence, read N- to C-terminus: Circadian clock-controlled protein daywake (260 aa).

Positions 1-25 are cleaved as a signal peptide; sequence MQLTGASMFLVWVGLLSWVSCRVDA.

It belongs to the TO family. As to expression, epidermis of newly eclosed adults.

Component of the circadian clock or downstream effector of clock function. Required for suppressing daytime sleep (siesta) under ambient environmental temperatures. Part of a heat avoidance mechanism that modulates daytime sleep behavior under different environmental temperatures to minimize the risk of heat exposure. Under cooler ambient temperatures, suppresses daytime sleep (siesta) and thus allows for longer periods of daytime activity. In Drosophila melanogaster (Fruit fly), this protein is Circadian clock-controlled protein daywake.